A 305-amino-acid chain; its full sequence is Imidazoleglycerol-phosphate dehydratase (305 aa).

Belongs to the imidazoleglycerol-phosphate dehydratase family.

The protein localises to the cytoplasm. The enzyme catalyses D-erythro-1-(imidazol-4-yl)glycerol 3-phosphate = 3-(imidazol-4-yl)-2-oxopropyl phosphate + H2O. It participates in amino-acid biosynthesis; L-histidine biosynthesis; L-histidine from 5-phospho-alpha-D-ribose 1-diphosphate: step 6/9. The polypeptide is Imidazoleglycerol-phosphate dehydratase (Neisseria meningitidis serogroup C (strain 053442)).